We begin with the raw amino-acid sequence, 140 residues long: MKEKTPFKNEKEFHDMVKKTKKGTFSGWYIVNPENNSVEFSGNFNRQFKLNKPVIPVNTEYVTRKEFNEYKDSNDQRLIKIETTLAAQGEQIRIQGEQIKELQIEQKAQSETLKLILQTLQKMSDRLDKMDVRLDKLESK.

Belongs to the UPF0134 family.

This is UPF0134 protein MPN_130 from Mycoplasma pneumoniae (strain ATCC 29342 / M129 / Subtype 1) (Mycoplasmoides pneumoniae).